A 39-amino-acid chain; its full sequence is Photosystem II reaction center protein L (39 aa).

Residues 18–38 (SLYLGLLFVFVTGVLMSSYFF) traverse the membrane as a helical segment.

This sequence belongs to the PsbL family. In terms of assembly, PSII is composed of 1 copy each of membrane proteins PsbA, PsbB, PsbC, PsbD, PsbE, PsbF, PsbH, PsbI, PsbJ, PsbK, PsbL, PsbM, PsbT, PsbX, PsbY, PsbZ, Psb30/Ycf12, peripheral proteins PsbO, CyanoQ (PsbQ), PsbU, PsbV and a large number of cofactors. It forms dimeric complexes.

It localises to the cellular thylakoid membrane. In terms of biological role, one of the components of the core complex of photosystem II (PSII). PSII is a light-driven water:plastoquinone oxidoreductase that uses light energy to abstract electrons from H(2)O, generating O(2) and a proton gradient subsequently used for ATP formation. It consists of a core antenna complex that captures photons, and an electron transfer chain that converts photonic excitation into a charge separation. This subunit is found at the monomer-monomer interface and is required for correct PSII assembly and/or dimerization. This chain is Photosystem II reaction center protein L, found in Synechococcus sp. (strain CC9605).